The chain runs to 95 residues: Small ribosomal subunit protein bS18 (95 aa).

The protein belongs to the bacterial ribosomal protein bS18 family. In terms of assembly, part of the 30S ribosomal subunit. Forms a tight heterodimer with protein bS6.

Functionally, binds as a heterodimer with protein bS6 to the central domain of the 16S rRNA, where it helps stabilize the platform of the 30S subunit. The polypeptide is Small ribosomal subunit protein bS18 (Ehrlichia ruminantium (strain Gardel)).